The chain runs to 350 residues: tRNA dimethylallyltransferase (350 aa).

ATP is bound at residue Gly34–Thr41. A substrate-binding site is contributed by Thr36–Thr41. Interaction with substrate tRNA stretches follow at residues Asp63–Leu66, Gln187–Arg191, and Arg274–Arg279.

This sequence belongs to the IPP transferase family. As to quaternary structure, monomer. Mg(2+) serves as cofactor.

The catalysed reaction is adenosine(37) in tRNA + dimethylallyl diphosphate = N(6)-dimethylallyladenosine(37) in tRNA + diphosphate. Catalyzes the transfer of a dimethylallyl group onto the adenine at position 37 in tRNAs that read codons beginning with uridine, leading to the formation of N6-(dimethylallyl)adenosine (i(6)A). In Paracidovorax citrulli (strain AAC00-1) (Acidovorax citrulli), this protein is tRNA dimethylallyltransferase.